Here is a 220-residue protein sequence, read N- to C-terminus: Large ribosomal subunit protein bL21 (220 aa).

The interval 109-158 is disordered; the sequence is SKKVAAKPATSEEKAAEEKPAKAKKEAAEKGASPRETKAAPLFSAPEGEP. A compositionally biased stretch (basic and acidic residues) spans 118–146; the sequence is TSEEKAAEEKPAKAKKEAAEKGASPRETK.

This sequence belongs to the bacterial ribosomal protein bL21 family. Part of the 50S ribosomal subunit. Contacts protein L20.

Functionally, this protein binds to 23S rRNA in the presence of protein L20. The protein is Large ribosomal subunit protein bL21 of Chelativorans sp. (strain BNC1).